A 370-amino-acid polypeptide reads, in one-letter code: Small ribosomal subunit biogenesis GTPase RsgA (370 aa).

Residues 111–270 (RSEGQILAAN…LIDTPGLRGV (160 aa)) form the CP-type G domain. GTP contacts are provided by residues 158–161 (TKAD) and 212–220 (GQSGAGKST). Cysteine 293, cysteine 298, histidine 300, and cysteine 306 together coordinate Zn(2+).

The protein belongs to the TRAFAC class YlqF/YawG GTPase family. RsgA subfamily. Monomer. Associates with 30S ribosomal subunit, binds 16S rRNA. Zn(2+) serves as cofactor.

The protein resides in the cytoplasm. Functionally, one of several proteins that assist in the late maturation steps of the functional core of the 30S ribosomal subunit. Helps release RbfA from mature subunits. May play a role in the assembly of ribosomal proteins into the subunit. Circularly permuted GTPase that catalyzes slow GTP hydrolysis, GTPase activity is stimulated by the 30S ribosomal subunit. This chain is Small ribosomal subunit biogenesis GTPase RsgA, found in Streptomyces avermitilis (strain ATCC 31267 / DSM 46492 / JCM 5070 / NBRC 14893 / NCIMB 12804 / NRRL 8165 / MA-4680).